Consider the following 83-residue polypeptide: Small ribosomal subunit protein bS16 (83 aa).

The protein belongs to the bacterial ribosomal protein bS16 family.

The chain is Small ribosomal subunit protein bS16 from Acidovorax ebreus (strain TPSY) (Diaphorobacter sp. (strain TPSY)).